We begin with the raw amino-acid sequence, 534 residues long: CTP synthase (534 aa).

The tract at residues 1-268 (MSVKYIFVTG…AKIVCKRLGL (268 aa)) is amidoligase domain. Residue S14 participates in CTP binding. Residue S14 coordinates UTP. 15–20 (GLGKGI) contributes to the ATP binding site. Residue Y55 participates in L-glutamine binding. An ATP-binding site is contributed by D72. Positions 72 and 142 each coordinate Mg(2+). CTP-binding positions include 149 to 151 (DIE), 189 to 194 (KTKPTQ), and K225. UTP contacts are provided by residues 189–194 (KTKPTQ) and K225. The 242-residue stretch at 293 to 534 (TIGLVGKYVE…VRAAYEYKTK (242 aa)) folds into the Glutamine amidotransferase type-1 domain. Residue G355 participates in L-glutamine binding. The active-site Nucleophile; for glutamine hydrolysis is C382. L-glutamine is bound by residues 383–386 (LGMQ), E406, and R462. Catalysis depends on residues H507 and E509.

The protein belongs to the CTP synthase family. As to quaternary structure, homotetramer.

It carries out the reaction UTP + L-glutamine + ATP + H2O = CTP + L-glutamate + ADP + phosphate + 2 H(+). It catalyses the reaction L-glutamine + H2O = L-glutamate + NH4(+). The enzyme catalyses UTP + NH4(+) + ATP = CTP + ADP + phosphate + 2 H(+). It participates in pyrimidine metabolism; CTP biosynthesis via de novo pathway; CTP from UDP: step 2/2. With respect to regulation, allosterically activated by GTP, when glutamine is the substrate; GTP has no effect on the reaction when ammonia is the substrate. The allosteric effector GTP functions by stabilizing the protein conformation that binds the tetrahedral intermediate(s) formed during glutamine hydrolysis. Inhibited by the product CTP, via allosteric rather than competitive inhibition. Catalyzes the ATP-dependent amination of UTP to CTP with either L-glutamine or ammonia as the source of nitrogen. Regulates intracellular CTP levels through interactions with the four ribonucleotide triphosphates. This is CTP synthase from Ruminiclostridium cellulolyticum (strain ATCC 35319 / DSM 5812 / JCM 6584 / H10) (Clostridium cellulolyticum).